The following is a 226-amino-acid chain: Probable transaldolase (226 aa).

Lysine 91 serves as the catalytic Schiff-base intermediate with substrate.

This sequence belongs to the transaldolase family. Type 3B subfamily.

Its subcellular location is the cytoplasm. The enzyme catalyses D-sedoheptulose 7-phosphate + D-glyceraldehyde 3-phosphate = D-erythrose 4-phosphate + beta-D-fructose 6-phosphate. Its pathway is carbohydrate degradation; pentose phosphate pathway; D-glyceraldehyde 3-phosphate and beta-D-fructose 6-phosphate from D-ribose 5-phosphate and D-xylulose 5-phosphate (non-oxidative stage): step 2/3. In terms of biological role, transaldolase is important for the balance of metabolites in the pentose-phosphate pathway. The sequence is that of Probable transaldolase from Chlorobium phaeobacteroides (strain DSM 266 / SMG 266 / 2430).